A 251-amino-acid chain; its full sequence is NADPH-dependent oxidoreductase (251 aa).

Belongs to the flavin oxidoreductase frp family. The cofactor is FMN.

Reduces FMN, organic nitro compounds and disulfide DTNB. Involved in maintenance of the cellular redox state and the disulfide stress response. This chain is NADPH-dependent oxidoreductase (nfrA), found in Staphylococcus epidermidis (strain ATCC 35984 / DSM 28319 / BCRC 17069 / CCUG 31568 / BM 3577 / RP62A).